The following is a 467-amino-acid chain: Probable lipase C1672.09 (467 aa).

Over 1–17 the chain is Cytoplasmic; that stretch reads MIQLPFIQRLKWEEYMA. The chain crosses the membrane as a helical; Signal-anchor for type II membrane protein span at residues 18-38; that stretch reads LFLGFFFVIFEKLLSCLAFMI. Over 39 to 467 the chain is Lumenal; sequence HNTLGLFYRS…NHIAPRNKPI (429 aa). At Ser66 the chain carries Phosphoserine. Residues 127–421 enclose the AB hydrolase-1 domain; the sequence is PVVYCHHGLL…SYEHLDMIWA (295 aa). Ser222 serves as the catalytic Nucleophile. N-linked (GlcNAc...) asparagine glycans are attached at residues Asn311 and Asn316. Active-site charge relay system residues include Asp389 and His415. Residues 440–457 are compositionally biased toward basic and acidic residues; sequence HHPPEHEENDKENREIQK. Positions 440-467 are disordered; it reads HHPPEHEENDKENREIQKNHIAPRNKPI.

Belongs to the AB hydrolase superfamily. Lipase family.

The protein localises to the cytoplasm. It is found in the membrane. In terms of biological role, probable lipase. In Schizosaccharomyces pombe (strain 972 / ATCC 24843) (Fission yeast), this protein is Probable lipase C1672.09.